A 99-amino-acid chain; its full sequence is Signal recognition particle 19 kDa protein (99 aa).

This sequence belongs to the SRP19 family. In terms of assembly, part of the signal recognition particle protein translocation system, which is composed of SRP and FtsY. Archaeal SRP consists of a 7S RNA molecule of 300 nucleotides and two protein subunits: SRP54 and SRP19.

The protein localises to the cytoplasm. In terms of biological role, involved in targeting and insertion of nascent membrane proteins into the cytoplasmic membrane. Binds directly to 7S RNA and mediates binding of the 54 kDa subunit of the SRP. This chain is Signal recognition particle 19 kDa protein, found in Ignicoccus hospitalis (strain KIN4/I / DSM 18386 / JCM 14125).